A 1221-amino-acid chain; its full sequence is 2-oxoglutarate dehydrogenase E1/E2 component (1221 aa).

A 2-oxoglutarate dehydrogenase E1, N-terminal part region spans residues 2–40; that stretch reads SSASTFGQNAWLVDEMFQQFQKDPKSVDKEWRELFEAQG. The segment at 22–107 is disordered; it reads QKDPKSVDKE…KLPEPGQTPI (86 aa). Residues 23-36 show a composition bias toward basic and acidic residues; the sequence is KDPKSVDKEWRELF. Residues 41 to 52 show a composition bias toward polar residues; it reads GPNTTPATTEAQ. A linker region spans residues 41-89; that stretch reads GPNTTPATTEAQPSAPKESAKPAPKAAPAAKAAPRVETKPADKTAPKAK. The segment covering 53–73 has biased composition (low complexity); the sequence is PSAPKESAKPAPKAAPAAKAA. Residues 74-90 show a composition bias toward basic and acidic residues; that stretch reads PRVETKPADKTAPKAKE. Residues 90 to 337 are succinyltransferase E2; it reads ESSVPQQPKL…LRTMSRLLTD (248 aa). His-316 functions as the Proton acceptor; for succinyltransferase activity in the catalytic mechanism. The interval 338–1221 is 2-oxoglutarate dehydrogenase E1, C-terminal part; that stretch reads DSFWDEIFDA…KQLIDEAFEA (884 aa). Arg-544 contacts thiamine diphosphate. 2-oxoglutarate-binding residues include His-583 and Ser-608. 6 residues coordinate thiamine diphosphate: Ser-608, Leu-610, Asp-645, Ala-646, Ala-647, and Asn-678. Asp-645 lines the Mg(2+) pocket. Positions 678 and 680 each coordinate Mg(2+). His-1017 is a binding site for 2-oxoglutarate. 5 residues coordinate acetyl-CoA: Thr-1035, Arg-1051, Lys-1087, Ser-1090, and Arg-1144.

It in the N-terminal section; belongs to the alpha-ketoglutarate dehydrogenase family. The protein in the C-terminal section; belongs to the 2-oxoacid dehydrogenase family. Homodimer. Part of an unusual ODH/PDH supercomplex, consisting of AceE (E1), AceF (E2), and Lpd (E3) together with OdhA (E1+E2). Interacts with the FHA domain of unphosphorylated OdhI via its C-terminal dehydrogenase domain. Mg(2+) is required as a cofactor. It depends on thiamine diphosphate as a cofactor.

The catalysed reaction is N(6)-[(R)-lipoyl]-L-lysyl-[protein] + 2-oxoglutarate + H(+) = N(6)-[(R)-S(8)-succinyldihydrolipoyl]-L-lysyl-[protein] + CO2. The enzyme catalyses N(6)-[(R)-dihydrolipoyl]-L-lysyl-[protein] + succinyl-CoA = N(6)-[(R)-S(8)-succinyldihydrolipoyl]-L-lysyl-[protein] + CoA. Its pathway is carbohydrate metabolism; tricarboxylic acid cycle; succinyl-CoA from 2-oxoglutarate (dehydrogenase route): step 1/1. With respect to regulation, inhibited by unphosphorylated OdhI, but not by phosphorylated OdhI. In terms of biological role, catalyzes the E1 and E2 reactions as part of 2-oxoglutarate dehydrogenase (ODH) activity, to convert 2-oxoglutarate to succinyl-CoA and CO(2). OdhA has reductase activity with 2-oxoglutarate but does not react with pyruvate, and also displays transsuccinylase but no transacetylase activity. Since OdhA is not lipoylated, the succinyltransferase activity of its E2 domain is dependent on lipoyl residues of the acetyltransferase AceF. This chain is 2-oxoglutarate dehydrogenase E1/E2 component, found in Corynebacterium glutamicum (strain ATCC 13032 / DSM 20300 / JCM 1318 / BCRC 11384 / CCUG 27702 / LMG 3730 / NBRC 12168 / NCIMB 10025 / NRRL B-2784 / 534).